We begin with the raw amino-acid sequence, 152 residues long: Large ribosomal subunit protein bL9 (152 aa).

The protein belongs to the bacterial ribosomal protein bL9 family.

Functionally, binds to the 23S rRNA. The protein is Large ribosomal subunit protein bL9 of Rippkaea orientalis (strain PCC 8801 / RF-1) (Cyanothece sp. (strain PCC 8801)).